A 337-amino-acid polypeptide reads, in one-letter code: Succinylglutamate desuccinylase (337 aa).

Residues His-59, Glu-62, and His-152 each contribute to the Zn(2+) site. Glu-216 is a catalytic residue.

It belongs to the AspA/AstE family. Succinylglutamate desuccinylase subfamily. Zn(2+) serves as cofactor.

It carries out the reaction N-succinyl-L-glutamate + H2O = L-glutamate + succinate. It participates in amino-acid degradation; L-arginine degradation via AST pathway; L-glutamate and succinate from L-arginine: step 5/5. Functionally, transforms N(2)-succinylglutamate into succinate and glutamate. The protein is Succinylglutamate desuccinylase of Ectopseudomonas mendocina (strain ymp) (Pseudomonas mendocina).